The primary structure comprises 200 residues: Late embryogenesis abundant protein 19 (200 aa).

Disordered regions lie at residues 1-145 and 172-200; these read MASH…KTGS and TEDE…ARDH. Basic and acidic residues-rich tracts occupy residues 13–23, 30–42, 53–81, 88–97, and 105–114; these read GETKAHTEEKA, SKDK…DRAS, QDTK…KDKT, ARDKAAESKD, and EKTEQAKQKA. The stretch at 52–81 forms a coiled coil; the sequence is GQDTKEATKEKAQAAKERASETAQAAKDKT. 2 stretches are compositionally biased toward low complexity: residues 115–130 and 186–200; these read AETA…ETAQ and TSAT…ARDH.

The protein belongs to the LEA type 4 family.

Functionally, involved in response to stress. The chain is Late embryogenesis abundant protein 19 from Oryza sativa subsp. japonica (Rice).